Consider the following 92-residue polypeptide: MATEQTILVGKKPATNYVIATVMAFNAGVKRVVLKARGAAISKAVSTAVMVRDRFLPGKVQIKDIKVLSDKVQGQGGRERTVAAVEIVLEMA.

N6-acetyllysine is present on lysine 11.

Belongs to the histone-like Alba family. Acetylated. Acetylation at Lys-11 decreases DNA-binding affinity.

It localises to the cytoplasm. The protein resides in the chromosome. Binds double-stranded DNA tightly but without sequence specificity. Involved in DNA compaction. This Pyrobaculum neutrophilum (strain DSM 2338 / JCM 9278 / NBRC 100436 / V24Sta) (Thermoproteus neutrophilus) protein is DNA/RNA-binding protein Alba.